A 252-amino-acid polypeptide reads, in one-letter code: Triosephosphate isomerase (252 aa).

9–11 (NWK) serves as a coordination point for substrate. His98 (electrophile) is an active-site residue. Glu170 (proton acceptor) is an active-site residue. Residues Gly176 and Ser215 each coordinate substrate.

The protein belongs to the triosephosphate isomerase family. As to quaternary structure, homodimer.

The protein localises to the cytoplasm. It carries out the reaction D-glyceraldehyde 3-phosphate = dihydroxyacetone phosphate. Its pathway is carbohydrate biosynthesis; gluconeogenesis. It functions in the pathway carbohydrate degradation; glycolysis; D-glyceraldehyde 3-phosphate from glycerone phosphate: step 1/1. Its function is as follows. Involved in the gluconeogenesis. Catalyzes stereospecifically the conversion of dihydroxyacetone phosphate (DHAP) to D-glyceraldehyde-3-phosphate (G3P). This is Triosephosphate isomerase from Buchnera aphidicola subsp. Baizongia pistaciae (strain Bp).